The following is a 240-amino-acid chain: uncharacterized protein (240 aa).

Positions methionine 1–alanine 17 are cleaved as a signal peptide.

This is an uncharacterized protein from Treponema pallidum (strain Nichols).